A 420-amino-acid chain; its full sequence is Tyrosine--tRNA ligase (420 aa).

Tyrosine 38 serves as a coordination point for L-tyrosine. Residues 43–52 (PTGDSLHIGH) carry the 'HIGH' region motif. L-tyrosine is bound by residues tyrosine 169 and glutamine 173. Residues 231-235 (KFGKS) carry the 'KMSKS' region motif. Residue lysine 234 participates in ATP binding. The region spanning 353 to 419 (KNIVDFLVDT…GKRKYTLVTI (67 aa)) is the S4 RNA-binding domain.

The protein belongs to the class-I aminoacyl-tRNA synthetase family. TyrS type 1 subfamily. In terms of assembly, homodimer.

It localises to the cytoplasm. It carries out the reaction tRNA(Tyr) + L-tyrosine + ATP = L-tyrosyl-tRNA(Tyr) + AMP + diphosphate + H(+). In terms of biological role, catalyzes the attachment of tyrosine to tRNA(Tyr) in a two-step reaction: tyrosine is first activated by ATP to form Tyr-AMP and then transferred to the acceptor end of tRNA(Tyr). The protein is Tyrosine--tRNA ligase of Lactobacillus acidophilus (strain ATCC 700396 / NCK56 / N2 / NCFM).